A 107-amino-acid chain; its full sequence is U1-lycotoxin-Ls1e (107 aa).

The first 20 residues, 1 to 20 (MMKVLVVVALLVTLISYSSS), serve as a signal peptide directing secretion. Positions 21–41 (EGIDDLEADELLSLMANEQTR) are excised as a propeptide. Disulfide bonds link Cys44-Cys59, Cys51-Cys68, Cys58-Cys86, and Cys70-Cys84.

The protein belongs to the neurotoxin 19 (CSTX) family. 04 (U1-Lctx) subfamily. As to expression, expressed by the venom gland.

The protein localises to the secreted. This Lycosa singoriensis (Wolf spider) protein is U1-lycotoxin-Ls1e.